Consider the following 225-residue polypeptide: Ribonuclease HII (225 aa).

Positions Gly-2–Ser-210 constitute an RNase H type-2 domain. The a divalent metal cation site is built by Asp-8, Glu-9, and Asp-107.

Belongs to the RNase HII family. Mn(2+) is required as a cofactor. Requires Mg(2+) as cofactor.

Its subcellular location is the cytoplasm. It catalyses the reaction Endonucleolytic cleavage to 5'-phosphomonoester.. In terms of biological role, endonuclease that specifically degrades the RNA of RNA-DNA hybrids. In Aeropyrum pernix (strain ATCC 700893 / DSM 11879 / JCM 9820 / NBRC 100138 / K1), this protein is Ribonuclease HII (rnhB).